The primary structure comprises 201 residues: Orotate phosphoribosyltransferase (201 aa).

Position 113–121 (E113–S121) interacts with 5-phospho-alpha-D-ribose 1-diphosphate. Orotate contacts are provided by T117 and R145.

The protein belongs to the purine/pyrimidine phosphoribosyltransferase family. PyrE subfamily. In terms of assembly, homodimer. Mg(2+) is required as a cofactor.

It carries out the reaction orotidine 5'-phosphate + diphosphate = orotate + 5-phospho-alpha-D-ribose 1-diphosphate. Its pathway is pyrimidine metabolism; UMP biosynthesis via de novo pathway; UMP from orotate: step 1/2. Catalyzes the transfer of a ribosyl phosphate group from 5-phosphoribose 1-diphosphate to orotate, leading to the formation of orotidine monophosphate (OMP). This Helicobacter pylori (strain Shi470) protein is Orotate phosphoribosyltransferase.